A 432-amino-acid chain; its full sequence is Amino-acid acetyltransferase (432 aa).

Positions 286–425 (ERVREAAIED…ASLYNYQRNS (140 aa)) constitute an N-acetyltransferase domain.

This sequence belongs to the acetyltransferase family. ArgA subfamily.

The protein resides in the cytoplasm. It carries out the reaction L-glutamate + acetyl-CoA = N-acetyl-L-glutamate + CoA + H(+). The protein operates within amino-acid biosynthesis; L-arginine biosynthesis; N(2)-acetyl-L-ornithine from L-glutamate: step 1/4. The chain is Amino-acid acetyltransferase from Pseudomonas fluorescens (strain ATCC BAA-477 / NRRL B-23932 / Pf-5).